Here is a 149-residue protein sequence, read N- to C-terminus: UPF0178 protein VC0395_A0405/VC395_0897 (149 aa).

This sequence belongs to the UPF0178 family.

The polypeptide is UPF0178 protein VC0395_A0405/VC395_0897 (Vibrio cholerae serotype O1 (strain ATCC 39541 / Classical Ogawa 395 / O395)).